The following is a 226-amino-acid chain: NADH-ubiquinone oxidoreductase chain 6 (226 aa).

Transmembrane regions (helical) follow at residues 1-21, 27-47, 52-72, 94-114, 126-146, and 185-205; these read MNNF…ILVI, VISV…LVLL, IGIS…LFVI, PLAT…VPSF, IFKF…LGVG, and ALWL…PITL.

The protein belongs to the complex I subunit 6 family.

The protein localises to the mitochondrion inner membrane. It carries out the reaction a ubiquinone + NADH + 5 H(+)(in) = a ubiquinol + NAD(+) + 4 H(+)(out). Functionally, core subunit of the mitochondrial membrane respiratory chain NADH dehydrogenase (Complex I) that is believed to belong to the minimal assembly required for catalysis. Complex I functions in the transfer of electrons from NADH to the respiratory chain. The immediate electron acceptor for the enzyme is believed to be ubiquinone. The protein is NADH-ubiquinone oxidoreductase chain 6 (ND6) of Mycosarcoma maydis (Corn smut fungus).